Reading from the N-terminus, the 559-residue chain is Leucine-rich repeat protein soc-2 (559 aa).

Basic and acidic residues predominate over residues Met1–Arg17. A disordered region spans residues Met1–Gly55. 20 LRR repeats span residues Gln74–Leu95, Gln97–Leu118, Asn120–Leu141, Ser143–Ile164, Ser166–Leu187, Lys189–Leu210, Ser212–Cys233, Ala235–Thr257, Asn258–Cys279, Gln281–Met302, Lys305–Gln326, Pro329–Lys350, Arg353–Trp374, Ser376–Leu397, Asn399–Leu420, Lys422–Leu443, His445–Leu466, Ser468–Leu489, Ser491–Cys513, and Ser515–Gly536.

Belongs to the SHOC2 family. As to quaternary structure, interacts with let-60.

Functionally, acts as a Ras effector and participates in MAPK pathway activation. Probably acts as a scaffolding protein in a protein phosphatase complex that specifically dephosphorylates Raf kinase and stimulates Raf activity at specialized signaling complexes upon Ras activation. Required for vulval development. Involved in fluid homeostasis. Plays a role in nicotinic acetylcholine receptor (nAChR)-mediated sensitivity to nicotine. The sequence is that of Leucine-rich repeat protein soc-2 (soc-2) from Caenorhabditis briggsae.